We begin with the raw amino-acid sequence, 494 residues long: PIGF/3-ketodihydrosphingosine reductase fusion protein (494 aa).

NADPH is bound by residues glycine 20, serine 22, and glycine 24. Positions 20–24 (GGSQG) match the GXSXG motif. Position 25 (leucine 25) interacts with NADP(+). Positions 45 and 49 each coordinate NADPH. Valine 54 lines the NADP(+) pocket. Aspartate 74 and leucine 75 together coordinate NADPH. A helical membrane pass occupies residues 148 to 168 (ILLVGSLLSSLPIIGYSAYSP). Tyrosine 166, lysine 170, and isoleucine 199 together coordinate NADP(+). The active-site Proton acceptor is the tyrosine 166. The Lowers pKa of active site Tyr role is filled by lysine 170. 6 helical membrane-spanning segments follow: residues 264–284 (HDNPILEYLFALVSLLAWPFY), 312–332 (IFTLLLTFTQLTIFYLSLNCL), 370–390 (LAGAASMLIGSLLISFILVAF), 402–422 (YFCALTLSVFTVYPLASTLAF), 444–464 (LRSWGPIIGAWFGAFPIPLDW), and 473–493 (ITIVIGAFLGYAFAAIVGEIL).

It in the N-terminal section; belongs to the short-chain dehydrogenases/reductases (SDR) family. This sequence in the C-terminal section; belongs to the PIGF family.

The protein resides in the endoplasmic reticulum membrane. It catalyses the reaction sphinganine + NADP(+) = 3-oxosphinganine + NADPH + H(+). It participates in glycolipid biosynthesis; glycosylphosphatidylinositol-anchor biosynthesis. Its pathway is lipid metabolism; sphingolipid metabolism. Functionally, acts in the GPI biosynthetic pathway between GlcNAc-PI synthesis and GPI transfer to protein. Required for the formation of complete GPI precursors CP1 and CP2. In terms of biological role, catalyzes the reduction of 3'-oxosphinganine (3-ketodihydrosphingosine/KDS) to sphinganine (dihydrosphingosine/DHS), the second step of de novo sphingolipid biosynthesis. In Schizosaccharomyces pombe (strain 972 / ATCC 24843) (Fission yeast), this protein is PIGF/3-ketodihydrosphingosine reductase fusion protein.